Consider the following 173-residue polypeptide: ATP synthase subunit b (173 aa).

A helical transmembrane segment spans residues 19 to 39 (IVWSLIILVIVAVFFYKFFMP).

This sequence belongs to the ATPase B chain family. In terms of assembly, F-type ATPases have 2 components, F(1) - the catalytic core - and F(0) - the membrane proton channel. F(1) has five subunits: alpha(3), beta(3), gamma(1), delta(1), epsilon(1). F(0) has three main subunits: a(1), b(2) and c(10-14). The alpha and beta chains form an alternating ring which encloses part of the gamma chain. F(1) is attached to F(0) by a central stalk formed by the gamma and epsilon chains, while a peripheral stalk is formed by the delta and b chains.

The protein localises to the cell membrane. In terms of biological role, f(1)F(0) ATP synthase produces ATP from ADP in the presence of a proton or sodium gradient. F-type ATPases consist of two structural domains, F(1) containing the extramembraneous catalytic core and F(0) containing the membrane proton channel, linked together by a central stalk and a peripheral stalk. During catalysis, ATP synthesis in the catalytic domain of F(1) is coupled via a rotary mechanism of the central stalk subunits to proton translocation. Its function is as follows. Component of the F(0) channel, it forms part of the peripheral stalk, linking F(1) to F(0). The protein is ATP synthase subunit b of Bifidobacterium longum (strain NCC 2705).